A 230-amino-acid chain; its full sequence is uncharacterized protein (230 aa).

A helical membrane pass occupies residues 93–115; it reads VFLYYFLIVYTSGNVDLISRFLF.

Belongs to the DUP/COS family.

Its subcellular location is the membrane. This is an uncharacterized protein from Saccharomyces cerevisiae (strain ATCC 204508 / S288c) (Baker's yeast).